We begin with the raw amino-acid sequence, 198 residues long: Glycerol-3-phosphate acyltransferase (198 aa).

The next 5 membrane-spanning stretches (helical) occupy residues 2 to 22 (IIDL…FGVL), 53 to 73 (LGFI…VIAT), 79 to 99 (PFMY…SCFL), 113 to 133 (VLIP…TFFI), and 152 to 172 (IILF…IMAL).

It belongs to the PlsY family. As to quaternary structure, probably interacts with PlsX.

It localises to the cell membrane. It catalyses the reaction an acyl phosphate + sn-glycerol 3-phosphate = a 1-acyl-sn-glycero-3-phosphate + phosphate. It participates in lipid metabolism; phospholipid metabolism. Its function is as follows. Catalyzes the transfer of an acyl group from acyl-phosphate (acyl-PO(4)) to glycerol-3-phosphate (G3P) to form lysophosphatidic acid (LPA). This enzyme utilizes acyl-phosphate as fatty acyl donor, but not acyl-CoA or acyl-ACP. The sequence is that of Glycerol-3-phosphate acyltransferase from Lawsonia intracellularis (strain PHE/MN1-00).